The following is a 635-amino-acid chain: Threonine--tRNA ligase (635 aa).

The TGS domain occupies 1-61 (MVSIRLPDGS…DRDASLAIVT (61 aa)). The segment at 242–533 (DHRKLGKQLD…LIEHHAGAMP (292 aa)) is catalytic. Cysteine 333, histidine 384, and histidine 510 together coordinate Zn(2+).

This sequence belongs to the class-II aminoacyl-tRNA synthetase family. Homodimer. Zn(2+) serves as cofactor.

It localises to the cytoplasm. The catalysed reaction is tRNA(Thr) + L-threonine + ATP = L-threonyl-tRNA(Thr) + AMP + diphosphate + H(+). Its function is as follows. Catalyzes the attachment of threonine to tRNA(Thr) in a two-step reaction: L-threonine is first activated by ATP to form Thr-AMP and then transferred to the acceptor end of tRNA(Thr). Also edits incorrectly charged L-seryl-tRNA(Thr). This chain is Threonine--tRNA ligase, found in Burkholderia vietnamiensis (strain G4 / LMG 22486) (Burkholderia cepacia (strain R1808)).